A 141-amino-acid polypeptide reads, in one-letter code: Short-chain diamines transporter (141 aa).

The next 4 helical transmembrane spans lie at 16-36, 39-59, 76-96, and 103-123; these read VILL…PLEV, TLGI…NHFF, ILHA…MVAY, and WQAI…TFIF.

This sequence belongs to the proteobacterial antimicrobial compound efflux (PACE) (TC 2.A.117) family.

Its subcellular location is the cell inner membrane. Functionally, mediates the efflux of short-chain diamines when energized by an electrochemical gradient. Involved in resistance to the synthetic biocide chlorhexidine, a widely used antiseptic and disinfectant in both hospital and community settings. Interacts directly with chlorhexidine and mediates its efflux via an energy-dependent mechanism. In Acinetobacter baylyi (strain ATCC 33305 / BD413 / ADP1), this protein is Short-chain diamines transporter.